Consider the following 376-residue polypeptide: Phosphoserine aminotransferase (376 aa).

R46 is an L-glutamate binding site. Residues 80–81 (AT), F104, T150, D172, and Q195 contribute to the pyridoxal 5'-phosphate site. An N6-(pyridoxal phosphate)lysine modification is found at K196. 247–248 (NT) is a binding site for pyridoxal 5'-phosphate.

The protein belongs to the class-V pyridoxal-phosphate-dependent aminotransferase family. SerC subfamily. In terms of assembly, homodimer. Requires pyridoxal 5'-phosphate as cofactor.

It is found in the cytoplasm. It catalyses the reaction O-phospho-L-serine + 2-oxoglutarate = 3-phosphooxypyruvate + L-glutamate. It carries out the reaction 4-(phosphooxy)-L-threonine + 2-oxoglutarate = (R)-3-hydroxy-2-oxo-4-phosphooxybutanoate + L-glutamate. It participates in amino-acid biosynthesis; L-serine biosynthesis; L-serine from 3-phospho-D-glycerate: step 2/3. The protein operates within cofactor biosynthesis; pyridoxine 5'-phosphate biosynthesis; pyridoxine 5'-phosphate from D-erythrose 4-phosphate: step 3/5. Functionally, catalyzes the reversible conversion of 3-phosphohydroxypyruvate to phosphoserine and of 3-hydroxy-2-oxo-4-phosphonooxybutanoate to phosphohydroxythreonine. This Corynebacterium glutamicum (strain R) protein is Phosphoserine aminotransferase.